We begin with the raw amino-acid sequence, 372 residues long: tRNA pseudouridine synthase D (372 aa).

Aspartate 85 serves as the catalytic Nucleophile. Residues glycine 160 to glycine 330 enclose the TRUD domain.

Belongs to the pseudouridine synthase TruD family.

It carries out the reaction uridine(13) in tRNA = pseudouridine(13) in tRNA. Functionally, responsible for synthesis of pseudouridine from uracil-13 in transfer RNAs. This is tRNA pseudouridine synthase D from Campylobacter jejuni subsp. jejuni serotype O:23/36 (strain 81-176).